The chain runs to 436 residues: Protein arginine methyltransferase NDUFAF7, mitochondrial (436 aa).

Residues 1 to 41 (MNALVRRCVARTGIPSIWRRKCFSSGNEPAESNHVTPMLRH) constitute a mitochondrion transit peptide. The disordered stretch occupies residues 413-436 (QGGKACQSEAPSTSVPGFDELVWH).

It belongs to the NDUFAF7 family. As to quaternary structure, interacts with NDUFS2.

The protein resides in the mitochondrion. It catalyses the reaction L-arginyl-[protein] + 2 S-adenosyl-L-methionine = N(omega),N(omega)'-dimethyl-L-arginyl-[protein] + 2 S-adenosyl-L-homocysteine + 2 H(+). Its function is as follows. Arginine methyltransferase involved in the assembly or stability of mitochondrial NADH:ubiquinone oxidoreductase complex (complex I). Acts by mediating symmetric dimethylation of 'Arg-118' of NDUFS2 after it assembles into the complex I, stabilizing the early intermediate complex. The chain is Protein arginine methyltransferase NDUFAF7, mitochondrial from Rattus norvegicus (Rat).